A 254-amino-acid chain; its full sequence is Phosphomannomutase (254 aa).

Asp-19 functions as the Nucleophile in the catalytic mechanism. 2 residues coordinate Mg(2+): Asp-19 and Asp-21. Asp-21 acts as the Proton donor/acceptor in catalysis. The alpha-D-mannose 1-phosphate site is built by Arg-28, Arg-130, Arg-141, Arg-148, Ser-186, and Asp-188. Mg(2+)-binding residues include Asp-216, Phe-228, Asp-230, and Thr-233. Ser-240 carries the phosphoserine modification.

This sequence belongs to the eukaryotic PMM family. In terms of assembly, homodimer.

Its subcellular location is the cytoplasm. The enzyme catalyses alpha-D-mannose 1-phosphate = D-mannose 6-phosphate. Its pathway is nucleotide-sugar biosynthesis; GDP-alpha-D-mannose biosynthesis; alpha-D-mannose 1-phosphate from D-fructose 6-phosphate: step 2/2. In terms of biological role, involved in the synthesis of the GDP-mannose and dolichol-phosphate-mannose required for a number of critical mannosyl transfer reactions such as folding and glycosylation of secretory proteins in the ER lumen. The polypeptide is Phosphomannomutase (Saccharomyces cerevisiae (strain ATCC 204508 / S288c) (Baker's yeast)).